The sequence spans 499 residues: Probable cytosol aminopeptidase (499 aa).

Residues K263 and D268 each contribute to the Mn(2+) site. The active site involves K275. D286, D345, and E347 together coordinate Mn(2+). Residue R349 is part of the active site.

Belongs to the peptidase M17 family. Requires Mn(2+) as cofactor.

It is found in the cytoplasm. It catalyses the reaction Release of an N-terminal amino acid, Xaa-|-Yaa-, in which Xaa is preferably Leu, but may be other amino acids including Pro although not Arg or Lys, and Yaa may be Pro. Amino acid amides and methyl esters are also readily hydrolyzed, but rates on arylamides are exceedingly low.. It carries out the reaction Release of an N-terminal amino acid, preferentially leucine, but not glutamic or aspartic acids.. In terms of biological role, presumably involved in the processing and regular turnover of intracellular proteins. Catalyzes the removal of unsubstituted N-terminal amino acids from various peptides. The sequence is that of Probable cytosol aminopeptidase from Chlamydia trachomatis serovar L2 (strain ATCC VR-902B / DSM 19102 / 434/Bu).